The sequence spans 338 residues: Phenylalanine--tRNA ligase alpha subunit (338 aa).

E252 lines the Mg(2+) pocket.

The protein belongs to the class-II aminoacyl-tRNA synthetase family. Phe-tRNA synthetase alpha subunit type 1 subfamily. In terms of assembly, tetramer of two alpha and two beta subunits. Mg(2+) serves as cofactor.

Its subcellular location is the cytoplasm. The catalysed reaction is tRNA(Phe) + L-phenylalanine + ATP = L-phenylalanyl-tRNA(Phe) + AMP + diphosphate + H(+). This chain is Phenylalanine--tRNA ligase alpha subunit, found in Mycoplasmoides gallisepticum (strain R(low / passage 15 / clone 2)) (Mycoplasma gallisepticum).